Reading from the N-terminus, the 1165-residue chain is DNA-directed RNA polymerase III subunit RPC2 (1165 aa).

The segment at 1–21 (MGVNTAGDPQKSQPKINKGGI) is disordered. Zn(2+) contacts are provided by Cys1111, Cys1114, Cys1123, and Cys1126. The segment at 1111 to 1126 (CGQCGLLGYKGWCNSC) adopts a C4-type zinc-finger fold.

It belongs to the RNA polymerase beta chain family. Component of the RNA polymerase III (Pol III) complex consisting of 17 subunits.

The protein localises to the nucleus. The catalysed reaction is RNA(n) + a ribonucleoside 5'-triphosphate = RNA(n+1) + diphosphate. Its function is as follows. DNA-dependent RNA polymerase catalyzes the transcription of DNA into RNA using the four ribonucleoside triphosphates as substrates. Second largest core component of RNA polymerase III which synthesizes small RNAs, such as 5S rRNA and tRNAs. Proposed to contribute to the polymerase catalytic activity and forms the polymerase active center together with the largest subunit. Pol III is composed of mobile elements and RPC2 is part of the core element with the central large cleft and probably a clamp element that moves to open and close the cleft. This Schizosaccharomyces pombe (strain 972 / ATCC 24843) (Fission yeast) protein is DNA-directed RNA polymerase III subunit RPC2 (rpc2).